The chain runs to 68 residues: Large ribosomal subunit protein uL29 (68 aa).

This sequence belongs to the universal ribosomal protein uL29 family.

In Archaeoglobus fulgidus (strain ATCC 49558 / DSM 4304 / JCM 9628 / NBRC 100126 / VC-16), this protein is Large ribosomal subunit protein uL29 (rpl29).